A 110-amino-acid polypeptide reads, in one-letter code: Small ribosomal subunit protein bS16 (110 aa).

The segment at Ala87–Lys110 is disordered.

Belongs to the bacterial ribosomal protein bS16 family.

The sequence is that of Small ribosomal subunit protein bS16 from Rhodopseudomonas palustris (strain HaA2).